Reading from the N-terminus, the 107-residue chain is Nucleoid-associated protein RT0857 (107 aa).

This sequence belongs to the YbaB/EbfC family. Homodimer.

It is found in the cytoplasm. It localises to the nucleoid. In terms of biological role, binds to DNA and alters its conformation. May be involved in regulation of gene expression, nucleoid organization and DNA protection. The sequence is that of Nucleoid-associated protein RT0857 from Rickettsia typhi (strain ATCC VR-144 / Wilmington).